The primary structure comprises 240 residues: Putative exosome complex component RRP41 (240 aa).

It belongs to the RNase PH family. In terms of assembly, component of the RNA exosome complex.

Its subcellular location is the cytoplasm. The protein localises to the nucleus. The protein resides in the nucleolus. It localises to the nucleoplasm. Non-catalytic component of the RNA exosome complex which has 3'-&gt;5' exoribonuclease activity and participates in a multitude of cellular RNA processing and degradation events. This chain is Putative exosome complex component RRP41 (exos-4.1), found in Caenorhabditis elegans.